The chain runs to 340 residues: Sodium/bile acid cotransporter 7 (340 aa).

Topologically, residues 1-10 (MRLLERARKE) are cytoplasmic. Residues 11–31 (WFMVGIVVAIGAAKLEPSVGV) form a helical membrane-spanning segment. The Extracellular portion of the chain corresponds to 32–37 (NGGPLK). Residues 38–58 (PEITVSYIAVATIFFNSGLSL) traverse the membrane as a helical segment. The Cytoplasmic segment spans residues 59–71 (KTEELTSALVHLR). A helical membrane pass occupies residues 72 to 92 (LHLFIQIFTLAFFPAAIWLFL). Over 93 to 116 (QLLSVTSINEWLLKGLQTVGCMPP) the chain is Extracellular. A helical membrane pass occupies residues 117-137 (PVSSAVILTKAVGGNEAAAIF). Residue asparagine 138 is a topological domain, cytoplasmic. The helical transmembrane segment at 139–159 (SAFGSFLGIVVTPVLLLLFLG) threads the bilayer. Topologically, residues 160–163 (SSSS) are extracellular. Residues 164-184 (VPFTSIFSQLFMTVVVPLVIG) form a helical membrane-spanning segment. Topologically, residues 185–201 (QIVRRYIKDWLERKKPP) are cytoplasmic. A helical membrane pass occupies residues 202–222 (FGVVSSSVLLMIIYTTFCDTF). Residues 223-234 (SNPNIDLDKFSL) lie on the Extracellular side of the membrane. Residues 235-255 (ILILFIIVSVQLSFMLLTFIF) traverse the membrane as a helical segment. The Cytoplasmic segment spans residues 256-270 (STRNNSGFTPADTVA). Residues 271–291 (IIFCSTHKSLTLGIPMLKIVF) traverse the membrane as a helical segment. At 292–298 (AGHEHLS) the chain is on the extracellular side. A helical transmembrane segment spans residues 299–319 (LISVPLLIYHPAQILLGSVLV). Residues 320–340 (PTIKSWMVSRQKGVKLTRPTV) lie on the Cytoplasmic side of the membrane.

Belongs to the bile acid:sodium symporter (BASS) (TC 2.A.28) family. As to expression, expressed in heart, brain, colon, lung, liver, adrenal gland, stomach and ovary. Also expressed weakly in small intestine. Expressed in skeletal tissues.

The protein resides in the cell membrane. It localises to the endoplasmic reticulum membrane. Its subcellular location is the golgi apparatus membrane. Functionally, involved in teeth and skeletal development. Has an essential role in the biosynthesis and trafficking of glycosaminoglycans and glycoproteins to produce a proper functioning extracellular matrix. Required for extracellular matrix mineralization. Also involved in the regulation of cellular calcium homeostasis. Does not show transport activity towards bile acids or steroid sulfates (including taurocholate, cholate, chenodeoxycholate, estrone-3-sulfate, dehydroepiandrosterone sulfate (DHEAS) and pregnenolone sulfate). The chain is Sodium/bile acid cotransporter 7 (Slc10a7) from Mus musculus (Mouse).